The chain runs to 262 residues: Intron-encoded DNA endonuclease ai2b (262 aa).

This sequence belongs to the LAGLIDADG endonuclease family.

The protein localises to the mitochondrion. In terms of biological role, mitochondrial DNA endonuclease involved in intron homing. This chain is Intron-encoded DNA endonuclease ai2b (ai2b), found in Dictyostelium discoideum (Social amoeba).